The sequence spans 871 residues: Isoleucine--tRNA ligase (871 aa).

Residues 57–67 carry the 'HIGH' region motif; it reads PYANGNLHMGH. E554 provides a ligand contact to L-isoleucyl-5'-AMP. A 'KMSKS' region motif is present at residues 595–599; it reads KMSKS. K598 lines the ATP pocket.

It belongs to the class-I aminoacyl-tRNA synthetase family. IleS type 1 subfamily. As to quaternary structure, monomer.

The protein localises to the cytoplasm. It catalyses the reaction tRNA(Ile) + L-isoleucine + ATP = L-isoleucyl-tRNA(Ile) + AMP + diphosphate. Catalyzes the attachment of isoleucine to tRNA(Ile). As IleRS can inadvertently accommodate and process structurally similar amino acids such as valine, to avoid such errors it has two additional distinct tRNA(Ile)-dependent editing activities. One activity is designated as 'pretransfer' editing and involves the hydrolysis of activated Val-AMP. The other activity is designated 'posttransfer' editing and involves deacylation of mischarged Val-tRNA(Ile). This is Isoleucine--tRNA ligase from Staphylococcus epidermidis.